Consider the following 131-residue polypeptide: Small ribosomal subunit protein uS11 (131 aa).

It belongs to the universal ribosomal protein uS11 family. As to quaternary structure, part of the 30S ribosomal subunit. Interacts with proteins S7 and S18. Binds to IF-3.

Functionally, located on the platform of the 30S subunit, it bridges several disparate RNA helices of the 16S rRNA. Forms part of the Shine-Dalgarno cleft in the 70S ribosome. This chain is Small ribosomal subunit protein uS11, found in Clostridium novyi (strain NT).